The sequence spans 363 residues: tRNA-specific 2-thiouridylase MnmA (363 aa).

Residues 6-13 (AMSGGVDS) and Leu32 contribute to the ATP site. The active-site Nucleophile is the Cys101. The cysteines at positions 101 and 193 are disulfide-linked. Residue Gly125 participates in ATP binding. Positions 143 to 145 (KDQ) are interaction with tRNA. The active-site Cysteine persulfide intermediate is the Cys193.

The protein belongs to the MnmA/TRMU family.

Its subcellular location is the cytoplasm. The catalysed reaction is S-sulfanyl-L-cysteinyl-[protein] + uridine(34) in tRNA + AH2 + ATP = 2-thiouridine(34) in tRNA + L-cysteinyl-[protein] + A + AMP + diphosphate + H(+). In terms of biological role, catalyzes the 2-thiolation of uridine at the wobble position (U34) of tRNA, leading to the formation of s(2)U34. The protein is tRNA-specific 2-thiouridylase MnmA of Mycobacterium marinum (strain ATCC BAA-535 / M).